Here is a 319-residue protein sequence, read N- to C-terminus: Acetyl-coenzyme A carboxylase carboxyl transferase subunit alpha (319 aa).

Positions N35–D296 constitute a CoA carboxyltransferase C-terminal domain.

The protein belongs to the AccA family. Acetyl-CoA carboxylase is a heterohexamer composed of biotin carboxyl carrier protein (AccB), biotin carboxylase (AccC) and two subunits each of ACCase subunit alpha (AccA) and ACCase subunit beta (AccD).

It is found in the cytoplasm. The catalysed reaction is N(6)-carboxybiotinyl-L-lysyl-[protein] + acetyl-CoA = N(6)-biotinyl-L-lysyl-[protein] + malonyl-CoA. It participates in lipid metabolism; malonyl-CoA biosynthesis; malonyl-CoA from acetyl-CoA: step 1/1. Functionally, component of the acetyl coenzyme A carboxylase (ACC) complex. First, biotin carboxylase catalyzes the carboxylation of biotin on its carrier protein (BCCP) and then the CO(2) group is transferred by the carboxyltransferase to acetyl-CoA to form malonyl-CoA. The sequence is that of Acetyl-coenzyme A carboxylase carboxyl transferase subunit alpha from Cronobacter sakazakii (strain ATCC BAA-894) (Enterobacter sakazakii).